The following is a 465-amino-acid chain: Hexokinase-4 (465 aa).

A Hexokinase domain is found at A10–A454. Residues E67–V203 are hexokinase small subdomain. An ATP-binding site is contributed by D78–N83. Substrate is bound by residues S151–F152, T168–K169, and N204–D205. The hexokinase large subdomain stretch occupies residues N204–E443. T228 contacts ATP. Positions 231, 256, and 290 each coordinate substrate. Residues G295–K296, T332–S336, and S411–L415 each bind ATP.

This sequence belongs to the hexokinase family. Monomer. Interacts with MIDN; the interaction occurs preferentially at low glucose levels and results in inhibition of hexokinase activity. Interacts with GCKR; leading to sequestration in the nucleus. As to expression, expression is restricted to the liver and pancreatic islets (at protein level).

It is found in the cytoplasm. The protein resides in the nucleus. The protein localises to the mitochondrion. The catalysed reaction is a D-hexose + ATP = a D-hexose 6-phosphate + ADP + H(+). It carries out the reaction D-fructose + ATP = D-fructose 6-phosphate + ADP + H(+). The enzyme catalyses D-glucose + ATP = D-glucose 6-phosphate + ADP + H(+). It catalyses the reaction D-mannose + ATP = D-mannose 6-phosphate + ADP + H(+). The protein operates within carbohydrate metabolism; hexose metabolism. Its pathway is carbohydrate degradation; glycolysis; D-glyceraldehyde 3-phosphate and glycerone phosphate from D-glucose: step 1/4. With respect to regulation, subject to allosteric regulation. Low glucose and high fructose-6-phosphate triggers association with the inhibitor GCKR followed by sequestration in the nucleus. In terms of biological role, catalyzes the phosphorylation of hexose, such as D-glucose, D-fructose and D-mannose, to hexose 6-phosphate (D-glucose 6-phosphate, D-fructose 6-phosphate and D-mannose 6-phosphate, respectively). Compared to other hexokinases, has a weak affinity for D-glucose, and is effective only when glucose is abundant. Mainly expressed in pancreatic beta cells and the liver and constitutes a rate-limiting step in glucose metabolism in these tissues. Since insulin secretion parallels glucose metabolism and the low glucose affinity of GCK ensures that it can change its enzymatic activity within the physiological range of glucose concentrations, GCK acts as a glucose sensor in the pancreatic beta cell. In pancreas, plays an important role in modulating insulin secretion. In liver, helps to facilitate the uptake and conversion of glucose by acting as an insulin-sensitive determinant of hepatic glucose usage. Required to provide D-glucose 6-phosphate for the synthesis of glycogen. Mediates the initial step of glycolysis by catalyzing phosphorylation of D-glucose to D-glucose 6-phosphate. This Rattus norvegicus (Rat) protein is Hexokinase-4.